The chain runs to 652 residues: DNA ligase (652 aa).

NAD(+) is bound by residues Asp-29–Asp-33, Ser-78–Leu-79, and Glu-107. Catalysis depends on Lys-109, which acts as the N6-AMP-lysine intermediate. Arg-130, Glu-164, Lys-278, and Lys-302 together coordinate NAD(+). Zn(2+) contacts are provided by Cys-395, Cys-398, Cys-413, and Cys-418. The 76-residue stretch at Asn-577–Leu-652 folds into the BRCT domain.

It belongs to the NAD-dependent DNA ligase family. LigA subfamily. It depends on Mg(2+) as a cofactor. Requires Mn(2+) as cofactor.

The catalysed reaction is NAD(+) + (deoxyribonucleotide)n-3'-hydroxyl + 5'-phospho-(deoxyribonucleotide)m = (deoxyribonucleotide)n+m + AMP + beta-nicotinamide D-nucleotide.. Functionally, DNA ligase that catalyzes the formation of phosphodiester linkages between 5'-phosphoryl and 3'-hydroxyl groups in double-stranded DNA using NAD as a coenzyme and as the energy source for the reaction. It is essential for DNA replication and repair of damaged DNA. This chain is DNA ligase, found in Streptococcus pyogenes serotype M49 (strain NZ131).